Here is a 439-residue protein sequence, read N- to C-terminus: tRNA-2-methylthio-N(6)-dimethylallyladenosine synthase (439 aa).

The region spanning 1–117 (MKFYIRTFGC…IGNLVKRALN (117 aa)) is the MTTase N-terminal domain. Residues Cys10, Cys46, Cys80, Cys153, Cys157, and Cys160 each coordinate [4Fe-4S] cluster. The Radical SAM core domain maps to 139 to 371 (PISKHHAWIT…MELQKRINLE (233 aa)). The TRAM domain occupies 369-436 (NLEENEKYLE…PGPLYGEVVN (68 aa)).

This sequence belongs to the methylthiotransferase family. MiaB subfamily. In terms of assembly, monomer. [4Fe-4S] cluster serves as cofactor.

The protein resides in the cytoplasm. It carries out the reaction N(6)-dimethylallyladenosine(37) in tRNA + (sulfur carrier)-SH + AH2 + 2 S-adenosyl-L-methionine = 2-methylsulfanyl-N(6)-dimethylallyladenosine(37) in tRNA + (sulfur carrier)-H + 5'-deoxyadenosine + L-methionine + A + S-adenosyl-L-homocysteine + 2 H(+). Functionally, catalyzes the methylthiolation of N6-(dimethylallyl)adenosine (i(6)A), leading to the formation of 2-methylthio-N6-(dimethylallyl)adenosine (ms(2)i(6)A) at position 37 in tRNAs that read codons beginning with uridine. This is tRNA-2-methylthio-N(6)-dimethylallyladenosine synthase from Petrotoga mobilis (strain DSM 10674 / SJ95).